The primary structure comprises 171 residues: Ribosome maturation factor RimM (171 aa).

The 75-residue stretch at 96 to 170 folds into the PRC barrel domain; that stretch reads AEGEYYYHEI…LVTIHVMEGL (75 aa).

It belongs to the RimM family. As to quaternary structure, binds ribosomal protein uS19.

It is found in the cytoplasm. Its function is as follows. An accessory protein needed during the final step in the assembly of 30S ribosomal subunit, possibly for assembly of the head region. Essential for efficient processing of 16S rRNA. May be needed both before and after RbfA during the maturation of 16S rRNA. It has affinity for free ribosomal 30S subunits but not for 70S ribosomes. This Bacillus cereus (strain G9842) protein is Ribosome maturation factor RimM.